The sequence spans 236 residues: Ubiquinone biosynthesis O-methyltransferase (236 aa).

The S-adenosyl-L-methionine site is built by Arg39, Gly59, Asp80, and Met124.

Belongs to the methyltransferase superfamily. UbiG/COQ3 family.

It carries out the reaction a 3-demethylubiquinol + S-adenosyl-L-methionine = a ubiquinol + S-adenosyl-L-homocysteine + H(+). The catalysed reaction is a 3-(all-trans-polyprenyl)benzene-1,2-diol + S-adenosyl-L-methionine = a 2-methoxy-6-(all-trans-polyprenyl)phenol + S-adenosyl-L-homocysteine + H(+). It functions in the pathway cofactor biosynthesis; ubiquinone biosynthesis. O-methyltransferase that catalyzes the 2 O-methylation steps in the ubiquinone biosynthetic pathway. The protein is Ubiquinone biosynthesis O-methyltransferase of Shewanella halifaxensis (strain HAW-EB4).